The following is a 246-amino-acid chain: 5'-nucleotidase SurE (246 aa).

The a divalent metal cation site is built by D8, D9, S39, and N91.

It belongs to the SurE nucleotidase family. A divalent metal cation is required as a cofactor.

It localises to the cytoplasm. It catalyses the reaction a ribonucleoside 5'-phosphate + H2O = a ribonucleoside + phosphate. Functionally, nucleotidase that shows phosphatase activity on nucleoside 5'-monophosphates. The chain is 5'-nucleotidase SurE from Dechloromonas aromatica (strain RCB).